Consider the following 225-residue polypeptide: Glutathione s-transferase kappa 2 (225 aa).

Glutathione-binding positions include 15–17 (SPY), asparagine 52, and 200–201 (SD).

The protein belongs to the GST superfamily. Kappa family. In terms of tissue distribution, expressed in the pharynx, body wall muscles and epidermis. Weaker expression is seen in the intestine.

It is found in the mitochondrion. The catalysed reaction is RX + glutathione = an S-substituted glutathione + a halide anion + H(+). Functionally, has roles in respiratory and lipid metabolism. The chain is Glutathione s-transferase kappa 2 (gstk-2) from Caenorhabditis elegans.